The following is a 271-amino-acid chain: Cyanophycinase (271 aa).

Residues serine 132, histidine 174, and glutamate 201 each act as charge relay system in the active site.

This sequence belongs to the peptidase S51 family. Homodimer.

It carries out the reaction [L-4-(L-arginin-2-N-yl)aspartate](n) + H2O = [L-4-(L-arginin-2-N-yl)aspartate](n-1) + L-4-(L-arginin-2-N-yl)aspartate. Its function is as follows. Exopeptidase that catalyzes the hydrolytic cleavage of multi-L-arginyl-poly-L-aspartic acid (cyanophycin; a water-insoluble reserve polymer) into aspartate-arginine dipeptides. This chain is Cyanophycinase (cphB), found in Synechocystis sp. (strain ATCC 27184 / PCC 6803 / Kazusa).